A 561-amino-acid chain; its full sequence is Probable galacturonosyltransferase 9 (561 aa).

At 1-27 (MAVAFRGGRGGVGSGQSTGLRSFFSYR) the chain is on the cytoplasmic side. The helical; Signal-anchor for type II membrane protein transmembrane segment at 28-48 (IFISALFSFLFLATFSVVLNS) threads the bilayer. The Lumenal portion of the chain corresponds to 49–561 (SRHQPHQDHT…EFVQMCNFGL (513 aa)). N-linked (GlcNAc...) asparagine glycosylation is found at Asn124, Asn320, Asn346, and Asn426.

It belongs to the glycosyltransferase 8 family. As to expression, expressed in roots, inflorescences, siliques, leaves and stems.

It localises to the golgi apparatus membrane. It functions in the pathway glycan metabolism; pectin biosynthesis. Functionally, may be involved in pectin synthesis. In Arabidopsis thaliana (Mouse-ear cress), this protein is Probable galacturonosyltransferase 9 (GAUT9).